The primary structure comprises 460 residues: Light-independent protochlorophyllide reductase subunit N (460 aa).

[4Fe-4S] cluster-binding residues include C22, C47, and C107.

The protein belongs to the BchN/ChlN family. Protochlorophyllide reductase is composed of three subunits; ChlL, ChlN and ChlB. Forms a heterotetramer of two ChlB and two ChlN subunits. [4Fe-4S] cluster is required as a cofactor.

It is found in the plastid. The protein localises to the cyanelle. The enzyme catalyses chlorophyllide a + oxidized 2[4Fe-4S]-[ferredoxin] + 2 ADP + 2 phosphate = protochlorophyllide a + reduced 2[4Fe-4S]-[ferredoxin] + 2 ATP + 2 H2O. The protein operates within porphyrin-containing compound metabolism; chlorophyll biosynthesis (light-independent). In terms of biological role, component of the dark-operative protochlorophyllide reductase (DPOR) that uses Mg-ATP and reduced ferredoxin to reduce ring D of protochlorophyllide (Pchlide) to form chlorophyllide a (Chlide). This reaction is light-independent. The NB-protein (ChlN-ChlB) is the catalytic component of the complex. This is Light-independent protochlorophyllide reductase subunit N from Cyanophora paradoxa.